The chain runs to 244 residues: 3-deoxy-manno-octulosonate cytidylyltransferase (244 aa).

Belongs to the KdsB family.

The protein resides in the cytoplasm. It catalyses the reaction 3-deoxy-alpha-D-manno-oct-2-ulosonate + CTP = CMP-3-deoxy-beta-D-manno-octulosonate + diphosphate. It participates in nucleotide-sugar biosynthesis; CMP-3-deoxy-D-manno-octulosonate biosynthesis; CMP-3-deoxy-D-manno-octulosonate from 3-deoxy-D-manno-octulosonate and CTP: step 1/1. The protein operates within bacterial outer membrane biogenesis; lipopolysaccharide biosynthesis. Activates KDO (a required 8-carbon sugar) for incorporation into bacterial lipopolysaccharide in Gram-negative bacteria. This chain is 3-deoxy-manno-octulosonate cytidylyltransferase, found in Synechococcus elongatus (strain ATCC 33912 / PCC 7942 / FACHB-805) (Anacystis nidulans R2).